The primary structure comprises 793 residues: Ferredoxin/F(420)H(2)-dependent CoB-CoM heterodisulfide reductase subunit A (793 aa).

147-170 (GGGVAGIEAALNLAEAGFPVTMVE) contributes to the FAD binding site. 4 4Fe-4S ferredoxin-type domains span residues 233–264 (RKPR…PMNY), 282–311 (QVVL…YEQK), 571–600 (MGAH…IENK), and 601–629 (KAVV…MRNF). [4Fe-4S] cluster is bound by residues Cys243, Cys246, Cys250, Cys254, Cys291, Cys294, Cys297, Cys301, Cys580, Cys583, Cys586, Cys590, Cys609, Cys612, Cys615, and Cys619.

It belongs to the HdrA family. The ferredoxin/F(420)H(2)-dependent CoB-CoM heterodisulfide reductase is composed of three subunits; HdrA2, HdrB2 and HdrC2. Requires [4Fe-4S] cluster as cofactor. [2Fe-2S] cluster serves as cofactor. The cofactor is FAD.

It localises to the cytoplasm. It catalyses the reaction coenzyme B + coenzyme M + 2 oxidized [2Fe-2S]-[ferredoxin] = coenzyme M-coenzyme B heterodisulfide + 2 reduced [2Fe-2S]-[ferredoxin] + 2 H(+). It carries out the reaction coenzyme B + 2 oxidized coenzyme F420-(gamma-L-Glu)(n) + coenzyme M + 2 reduced [2Fe-2S]-[ferredoxin] + 4 H(+) = coenzyme M-coenzyme B heterodisulfide + 2 reduced coenzyme F420-(gamma-L-Glu)(n) + 2 oxidized [2Fe-2S]-[ferredoxin]. Its pathway is cofactor metabolism; coenzyme M-coenzyme B heterodisulfide reduction; coenzyme B and coenzyme M from coenzyme M-coenzyme B heterodisulfide: step 1/1. In terms of biological role, part of a complex that catalyzes the reversible reduction of CoM-S-S-CoB to the thiol-coenzymes H-S-CoM (coenzyme M) and H-S-CoB (coenzyme B). Catalyzes the transfer of electrons from ferredoxin to CoM-S-S-CoB during methanogenesis from acetate. Electrons transfer from ferredoxin to CoM-S-S-CoB via HdrA2, HdrC2 and HdrB2. In addition, the complex can use electron bifurcation to direct electron pairs from reduced coenzyme F420 towards the reduction of both ferredoxin and CoB-CoM heterodisulfide. This activity may take place during Fe(III)-dependent anaerobic methane oxidation. This Methanosarcina acetivorans (strain ATCC 35395 / DSM 2834 / JCM 12185 / C2A) protein is Ferredoxin/F(420)H(2)-dependent CoB-CoM heterodisulfide reductase subunit A.